Consider the following 230-residue polypeptide: Cytochrome c oxidase subunit 2 (230 aa).

The Mitochondrial intermembrane segment spans residues methionine 1–serine 14. A helical transmembrane segment spans residues proline 15 to methionine 45. The Mitochondrial matrix segment spans residues valine 46 to glutamine 59. A helical transmembrane segment spans residues glutamate 60–methionine 87. Over aspartate 88–alanine 230 the chain is Mitochondrial intermembrane. Cu cation is bound by residues histidine 161, cysteine 196, glutamate 198, cysteine 200, histidine 204, and methionine 207. Residue glutamate 198 participates in Mg(2+) binding.

The protein belongs to the cytochrome c oxidase subunit 2 family. As to quaternary structure, component of the cytochrome c oxidase (complex IV, CIV), a multisubunit enzyme composed of 14 subunits. The complex is composed of a catalytic core of 3 subunits MT-CO1, MT-CO2 and MT-CO3, encoded in the mitochondrial DNA, and 11 supernumerary subunits COX4I, COX5A, COX5B, COX6A, COX6B, COX6C, COX7A, COX7B, COX7C, COX8 and NDUFA4, which are encoded in the nuclear genome. The complex exists as a monomer or a dimer and forms supercomplexes (SCs) in the inner mitochondrial membrane with NADH-ubiquinone oxidoreductase (complex I, CI) and ubiquinol-cytochrome c oxidoreductase (cytochrome b-c1 complex, complex III, CIII), resulting in different assemblies (supercomplex SCI(1)III(2)IV(1) and megacomplex MCI(2)III(2)IV(2)). Found in a complex with TMEM177, COA6, COX18, COX20, SCO1 and SCO2. Interacts with TMEM177 in a COX20-dependent manner. Interacts with COX20. Interacts with COX16. Requires Cu cation as cofactor.

It localises to the mitochondrion inner membrane. The enzyme catalyses 4 Fe(II)-[cytochrome c] + O2 + 8 H(+)(in) = 4 Fe(III)-[cytochrome c] + 2 H2O + 4 H(+)(out). In terms of biological role, component of the cytochrome c oxidase, the last enzyme in the mitochondrial electron transport chain which drives oxidative phosphorylation. The respiratory chain contains 3 multisubunit complexes succinate dehydrogenase (complex II, CII), ubiquinol-cytochrome c oxidoreductase (cytochrome b-c1 complex, complex III, CIII) and cytochrome c oxidase (complex IV, CIV), that cooperate to transfer electrons derived from NADH and succinate to molecular oxygen, creating an electrochemical gradient over the inner membrane that drives transmembrane transport and the ATP synthase. Cytochrome c oxidase is the component of the respiratory chain that catalyzes the reduction of oxygen to water. Electrons originating from reduced cytochrome c in the intermembrane space (IMS) are transferred via the dinuclear copper A center (CU(A)) of subunit 2 and heme A of subunit 1 to the active site in subunit 1, a binuclear center (BNC) formed by heme A3 and copper B (CU(B)). The BNC reduces molecular oxygen to 2 water molecules using 4 electrons from cytochrome c in the IMS and 4 protons from the mitochondrial matrix. The sequence is that of Cytochrome c oxidase subunit 2 (mt-co2) from Gadus morhua (Atlantic cod).